The chain runs to 144 residues: Phosphomevalonate dehydratase small subunit (144 aa).

The Proton acceptor role is filled by S65.

It belongs to the AcnX type II small subunit family. As to quaternary structure, heterodimer composed of a large subunit (PMDh-L) and a small subunit (PMDh-S).

It catalyses the reaction (R)-5-phosphomevalonate = (2E)-3-methyl-5-phosphooxypent-2-enoate + H2O. It functions in the pathway isoprenoid biosynthesis; isopentenyl diphosphate biosynthesis via mevalonate pathway. Component of a hydro-lyase that catalyzes the dehydration of mevalonate 5-phosphate (MVA5P) to form trans-anhydromevalonate 5-phosphate (tAHMP). Involved in the archaeal mevalonate (MVA) pathway, which provides fundamental precursors for isoprenoid biosynthesis, such as isopentenyl diphosphate (IPP) and dimethylallyl diphosphate (DMAPP). This Methanosarcina acetivorans (strain ATCC 35395 / DSM 2834 / JCM 12185 / C2A) protein is Phosphomevalonate dehydratase small subunit.